The primary structure comprises 93 residues: U12-lycotoxin-Ls1a (93 aa).

The first 18 residues, 1-18 (MKFAVILLFSLVVLTVAS), serve as a signal peptide directing secretion. Residues 19–38 (ESVEEVRREIDIEDLPEQQR) constitute a propeptide that is removed on maturation.

Belongs to the neurotoxin 31 family. Contains 5 disulfide bonds. Expressed by the venom gland.

It is found in the secreted. The polypeptide is U12-lycotoxin-Ls1a (Lycosa singoriensis (Wolf spider)).